The sequence spans 447 residues: Tubulin alpha-1 chain (447 aa).

8 residues coordinate GTP: Gln-11, Glu-72, Ser-141, Gly-145, Thr-146, Thr-180, Asn-207, and Asn-229. Glu-72 contributes to the Mg(2+) binding site. Glu-255 is an active-site residue.

Belongs to the tubulin family. Dimer of alpha and beta chains. A typical microtubule is a hollow water-filled tube with an outer diameter of 25 nm and an inner diameter of 15 nM. Alpha-beta heterodimers associate head-to-tail to form protofilaments running lengthwise along the microtubule wall with the beta-tubulin subunit facing the microtubule plus end conferring a structural polarity. Microtubules usually have 13 protofilaments but different protofilament numbers can be found in some organisms and specialized cells. Requires Mg(2+) as cofactor.

The protein localises to the cytoplasm. It is found in the cytoskeleton. It carries out the reaction GTP + H2O = GDP + phosphate + H(+). Tubulin is the major constituent of microtubules, a cylinder consisting of laterally associated linear protofilaments composed of alpha- and beta-tubulin heterodimers. Microtubules grow by the addition of GTP-tubulin dimers to the microtubule end, where a stabilizing cap forms. Below the cap, tubulin dimers are in GDP-bound state, owing to GTPase activity of alpha-tubulin. The sequence is that of Tubulin alpha-1 chain (TUB1) from Saccharomyces cerevisiae (strain ATCC 204508 / S288c) (Baker's yeast).